The primary structure comprises 240 residues: Uridylate kinase (240 aa).

12-15 (KLSG) contributes to the ATP binding site. Gly-54 is a UMP binding site. ATP contacts are provided by Gly-55 and Arg-59. Residues Asp-74 and 135 to 142 (TGNPFFTT) contribute to the UMP site. ATP contacts are provided by Thr-162, Tyr-168, and Asp-171.

The protein belongs to the UMP kinase family. As to quaternary structure, homohexamer.

The protein localises to the cytoplasm. It carries out the reaction UMP + ATP = UDP + ADP. Its pathway is pyrimidine metabolism; CTP biosynthesis via de novo pathway; UDP from UMP (UMPK route): step 1/1. Its activity is regulated as follows. Inhibited by UTP. Catalyzes the reversible phosphorylation of UMP to UDP. This Xanthomonas euvesicatoria pv. vesicatoria (strain 85-10) (Xanthomonas campestris pv. vesicatoria) protein is Uridylate kinase.